A 393-amino-acid chain; its full sequence is Formate-dependent phosphoribosylglycinamide formyltransferase (393 aa).

N(1)-(5-phospho-beta-D-ribosyl)glycinamide contacts are provided by residues 22–23 (EL) and Glu82. ATP contacts are provided by residues Arg114, Lys155, 160–165 (SSGKGQ), 195–198 (EGFI), and Glu203. Positions 119–308 (RLAAEELGLP…EFALHARAIL (190 aa)) constitute an ATP-grasp domain. Residues Glu267 and Glu279 each contribute to the Mg(2+) site. N(1)-(5-phospho-beta-D-ribosyl)glycinamide-binding positions include Asp286, Lys356, and 363–364 (RR).

Belongs to the PurK/PurT family. In terms of assembly, homodimer.

It carries out the reaction N(1)-(5-phospho-beta-D-ribosyl)glycinamide + formate + ATP = N(2)-formyl-N(1)-(5-phospho-beta-D-ribosyl)glycinamide + ADP + phosphate + H(+). It participates in purine metabolism; IMP biosynthesis via de novo pathway; N(2)-formyl-N(1)-(5-phospho-D-ribosyl)glycinamide from N(1)-(5-phospho-D-ribosyl)glycinamide (formate route): step 1/1. In terms of biological role, involved in the de novo purine biosynthesis. Catalyzes the transfer of formate to 5-phospho-ribosyl-glycinamide (GAR), producing 5-phospho-ribosyl-N-formylglycinamide (FGAR). Formate is provided by PurU via hydrolysis of 10-formyl-tetrahydrofolate. The protein is Formate-dependent phosphoribosylglycinamide formyltransferase of Azoarcus sp. (strain BH72).